Reading from the N-terminus, the 123-residue chain is MPTINQLIASPRVVQKSRKKVPALQQSPQKRGVCTRVYTTTPKKPNSALRKVAKVRLTNGFEVIGYIPGEGHNLQEHSVVMIRGGRVKDLPGVRYHILRGVLDTQGVKNRKQRRSKYGAKRPK.

Position 89 is a 3-methylthioaspartic acid (aspartate 89).

This sequence belongs to the universal ribosomal protein uS12 family. As to quaternary structure, part of the 30S ribosomal subunit. Contacts proteins S8 and S17. May interact with IF1 in the 30S initiation complex.

With S4 and S5 plays an important role in translational accuracy. Its function is as follows. Interacts with and stabilizes bases of the 16S rRNA that are involved in tRNA selection in the A site and with the mRNA backbone. Located at the interface of the 30S and 50S subunits, it traverses the body of the 30S subunit contacting proteins on the other side and probably holding the rRNA structure together. The combined cluster of proteins S8, S12 and S17 appears to hold together the shoulder and platform of the 30S subunit. The chain is Small ribosomal subunit protein uS12 from Rhodopseudomonas palustris (strain BisB18).